Here is a 452-residue protein sequence, read N- to C-terminus: MISQFFILSSKGDPLIYKDFRGDSGGRDVAELFYRKLTGLPGDESPVVMHHDDRHFIHIRHSGLYLVATTSENISPFSLLELLSRLATLLGDYCGSLSEGTISRNVALVYELLDEVLDYGYVQTTSMEMLRNFIQTEAVVSKPFSLFDLSSVGLFGAETQQSKVAPSTAASRPVLASRSDQSQKNEVFLDVVERLSVLIASNGSLLKVDVQGEIRLKSFLPSGSEMRIGLTEEFCVGKSELRGYGPGIRVDEVSFHSSVLLEEFESHRILRLQPPQGELTVMRYQLSDDLPSPLPFRLFPSVQWDRGSGRLQVYLKLRCDLPPKSQALNVRLHLPLPRGVVSLSQELSGPEQKAELGEGALRWDLPRVQGGSQLSGLFQMDVPGLPGPPGQGHSATAPLGLGPASLSFELPRHTCSGLQVRFLRLAFRPCGSTSPHKWVRHLSHSDAYVIRI.

One can recognise an MHD domain in the interval 184–451; the sequence is KNEVFLDVVE…LSHSDAYVIR (268 aa).

Belongs to the adaptor complexes medium subunit family. In terms of assembly, adaptor protein complex 4 (AP-4) is a heterotetramer composed of two large adaptins (epsilon-type subunit AP4E1 and beta-type subunit AP4B1), a medium adaptin (mu-type subunit AP4M1) and a small adaptin (sigma-type AP4S1). Interacts with tyrosine-based sorting signals on the cytoplasmic tail of cargo proteins such as APP, ATG9A, LAMP2 and NAGPA. Interacts with the C-terminal domain of GRID2. Interacts with GRIA1 and GRIA2; the interaction is indirect via CACNG3. Interacts with CACNG3; CACNG3 associates GRIA1 and GRIA2 with the adaptor protein complex 4 (AP-4) to target them to the somatodendritic compartment of neurons. Interacts with HOOK1 and HOOK2; the interactions are direct, mediate the interaction between FTS-Hook-FHIP (FHF) complex and AP-4 and the perinuclear distribution of AP-4.

The protein localises to the golgi apparatus. It localises to the trans-Golgi network membrane. The protein resides in the early endosome. Functionally, component of the adaptor protein complex 4 (AP-4). Adaptor protein complexes are vesicle coat components involved both in vesicle formation and cargo selection. They control the vesicular transport of proteins in different trafficking pathways. AP-4 forms a non clathrin-associated coat on vesicles departing the trans-Golgi network (TGN) and may be involved in the targeting of proteins from the trans-Golgi network (TGN) to the endosomal-lysosomal system. It is also involved in protein sorting to the basolateral membrane in epithelial cells and the proper asymmetric localization of somatodendritic proteins in neurons. Within AP-4, the mu-type subunit AP4M1 is directly involved in the recognition and binding of tyrosine-based sorting signals found in the cytoplasmic part of cargos. The adaptor protein complex 4 (AP-4) may also recognize other types of sorting signal. This is AP-4 complex subunit mu-1 from Canis lupus familiaris (Dog).